Consider the following 540-residue polypeptide: Chaperonin GroEL (540 aa).

ATP is bound by residues 30-33, lysine 51, 87-91, glycine 415, and aspartate 495; these read TLGP and DGTTT.

This sequence belongs to the chaperonin (HSP60) family. As to quaternary structure, forms a cylinder of 14 subunits composed of two heptameric rings stacked back-to-back. Interacts with the co-chaperonin GroES.

The protein resides in the cytoplasm. It carries out the reaction ATP + H2O + a folded polypeptide = ADP + phosphate + an unfolded polypeptide.. In terms of biological role, together with its co-chaperonin GroES, plays an essential role in assisting protein folding. The GroEL-GroES system forms a nano-cage that allows encapsulation of the non-native substrate proteins and provides a physical environment optimized to promote and accelerate protein folding. The protein is Chaperonin GroEL of Serratia ficaria.